A 100-amino-acid polypeptide reads, in one-letter code: Urease subunit gamma (100 aa).

The protein belongs to the urease gamma subunit family. Heterotrimer of UreA (gamma), UreB (beta) and UreC (alpha) subunits. Three heterotrimers associate to form the active enzyme.

It is found in the cytoplasm. The enzyme catalyses urea + 2 H2O + H(+) = hydrogencarbonate + 2 NH4(+). It participates in nitrogen metabolism; urea degradation; CO(2) and NH(3) from urea (urease route): step 1/1. This chain is Urease subunit gamma, found in Rhodopseudomonas palustris (strain BisB5).